We begin with the raw amino-acid sequence, 327 residues long: MHLFKDSLNLIVSSGNGGAGCVSFLREKFKAKGGPDGGDGGRGGDVIFKVKSNLKTLSLYRNGQKLSASNGKSGMGLKKSGAAGSDLIIFVPPNTSIYDADSNCMLFELKNFDDEVVVLKGGRGGLGNVNFKSSTKRTPRFAQPGESGLTLNLRLELSLIADIGLVGLPNAGKSSLISKITASRSRVANYPFTTKIPHFGVVRVSYNDLIIADLPGIIEGASKGIGLGFEFLRHISKTQILVFLIDVSSDDFMSAYDILINELRVYDIGLLKKKRIIVASKLDLEGATENFNQLKSILSEERVLGISIYDNIGINELVSEFFSLVKI.

Residues 2–160 (HLFKDSLNLI…LNLRLELSLI (159 aa)) form the Obg domain. The 166-residue stretch at 161-326 (ADIGLVGLPN…LVSEFFSLVK (166 aa)) folds into the OBG-type G domain. Residues 167-174 (GLPNAGKS), 192-196 (FTTKI), 213-216 (DLPG), 280-283 (SKLD), and 307-309 (SIY) contribute to the GTP site. Ser-174 and Thr-194 together coordinate Mg(2+).

Belongs to the TRAFAC class OBG-HflX-like GTPase superfamily. OBG GTPase family. In terms of assembly, monomer. It depends on Mg(2+) as a cofactor.

Its subcellular location is the cytoplasm. Functionally, an essential GTPase which binds GTP, GDP and possibly (p)ppGpp with moderate affinity, with high nucleotide exchange rates and a fairly low GTP hydrolysis rate. Plays a role in control of the cell cycle, stress response, ribosome biogenesis and in those bacteria that undergo differentiation, in morphogenesis control. This Borrelia duttonii (strain Ly) protein is GTPase Obg.